Here is a 119-residue protein sequence, read N- to C-terminus: Holo-[acyl-carrier-protein] synthase (119 aa).

Mg(2+) contacts are provided by Asp8 and Glu58.

The protein belongs to the P-Pant transferase superfamily. AcpS family. Mg(2+) is required as a cofactor.

It is found in the cytoplasm. The catalysed reaction is apo-[ACP] + CoA = holo-[ACP] + adenosine 3',5'-bisphosphate + H(+). Transfers the 4'-phosphopantetheine moiety from coenzyme A to a Ser of acyl-carrier-protein. The polypeptide is Holo-[acyl-carrier-protein] synthase (Bacillus mycoides (strain KBAB4) (Bacillus weihenstephanensis)).